We begin with the raw amino-acid sequence, 206 residues long: Large ribosomal subunit protein uL4 (206 aa).

Positions 47–94 (NRAQKDRSEINKSTKKPFRQKGTGRARAGRASSPLWRGGGKVFPNSPD) are disordered. Residues 49 to 58 (AQKDRSEINK) are compositionally biased toward basic and acidic residues. A compositionally biased stretch (basic residues) spans 59–74 (STKKPFRQKGTGRARA).

This sequence belongs to the universal ribosomal protein uL4 family. In terms of assembly, part of the 50S ribosomal subunit.

Its function is as follows. One of the primary rRNA binding proteins, this protein initially binds near the 5'-end of the 23S rRNA. It is important during the early stages of 50S assembly. It makes multiple contacts with different domains of the 23S rRNA in the assembled 50S subunit and ribosome. Forms part of the polypeptide exit tunnel. The protein is Large ribosomal subunit protein uL4 of Laribacter hongkongensis (strain HLHK9).